A 252-amino-acid chain; its full sequence is Chitooligosaccharide deacetylase (252 aa).

The Mg(2+) site is built by histidine 61 and histidine 125.

This sequence belongs to the YdjC deacetylase family. ChbG subfamily. Homodimer. It depends on Mg(2+) as a cofactor.

Its subcellular location is the cytoplasm. It catalyses the reaction N,N'-diacetylchitobiose + H2O = N-acetyl-beta-D-glucosaminyl-(1-&gt;4)-D-glucosamine + acetate. The catalysed reaction is diacetylchitobiose-6'-phosphate + H2O = N'-monoacetylchitobiose-6'-phosphate + acetate. The protein operates within glycan degradation; chitin degradation. Involved in the degradation of chitin. ChbG is essential for growth on the acetylated chitooligosaccharides chitobiose and chitotriose but is dispensable for growth on cellobiose and chitosan dimer, the deacetylated form of chitobiose. Deacetylation of chitobiose-6-P and chitotriose-6-P is necessary for both the activation of the chb promoter by the regulatory protein ChbR and the hydrolysis of phosphorylated beta-glucosides by the phospho-beta-glucosidase ChbF. Catalyzes the removal of only one acetyl group from chitobiose-6-P to yield monoacetylchitobiose-6-P, the inducer of ChbR and the substrate of ChbF. The polypeptide is Chitooligosaccharide deacetylase (Salmonella paratyphi C (strain RKS4594)).